The following is a 220-amino-acid chain: LHFPL tetraspan subfamily member 1 protein (220 aa).

Positions 1-20 are cleaved as a signal peptide; it reads MRSSLTMVGTLWAFLSLVTA. The next 2 membrane-spanning stretches (helical) occupy residues 86–106 and 122–142; these read VVTG…VLGC and AAQF…PLGW. Residue Asn-153 is glycosylated (N-linked (GlcNAc...) asparagine). Residues 165–185 form a helical membrane-spanning segment; sequence LGWAYYCAGGGAAAAMLICTW.

This sequence belongs to the LHFP family. Widely expressed. Expressed at high levels in lung, thymus, skeletal muscle, colon and ovary.

Its subcellular location is the membrane. This Homo sapiens (Human) protein is LHFPL tetraspan subfamily member 1 protein.